Reading from the N-terminus, the 481-residue chain is Uridine 5'-monophosphate synthase (481 aa).

The tract at residues 1–214 (MEVASQALGP…VFSAANHNGL (214 aa)) is OPRTase. A Phosphotyrosine modification is found at tyrosine 37. A domain linker region spans residues 215 to 220 (PPPEKK). Positions 221–481 (ACKELSFGAR…EAYLSRLAVQ (261 aa)) are OMPdecase. Serine 257 lines the orotidine 5'-phosphate pocket. UMP contacts are provided by residues serine 257, aspartate 259, and 281–283 (KTH). Orotidine 5'-phosphate-binding positions include lysine 281, lysine 314, aspartate 317, threonine 321, serine 372, 430–432 (QQY), and 450–451 (GR). Active-site for OMPdecase activity residues include lysine 314 and aspartate 317. Residues aspartate 317, threonine 321, serine 372, 430 to 432 (QQY), and 450 to 451 (GR) each bind UMP.

It in the N-terminal section; belongs to the purine/pyrimidine phosphoribosyltransferase family. The protein in the C-terminal section; belongs to the OMP decarboxylase family. As to quaternary structure, homodimer; dimerization is required for enzymatic activity.

It catalyses the reaction orotidine 5'-phosphate + diphosphate = orotate + 5-phospho-alpha-D-ribose 1-diphosphate. The enzyme catalyses orotidine 5'-phosphate + H(+) = UMP + CO2. Its pathway is pyrimidine metabolism; UMP biosynthesis via de novo pathway; UMP from orotate: step 1/2. The protein operates within pyrimidine metabolism; UMP biosynthesis via de novo pathway; UMP from orotate: step 2/2. Its function is as follows. Bifunctional enzyme catalyzing the last two steps of de novo pyrimidine biosynthesis, orotate phosphoribosyltransferase (OPRT), which converts orotate to orotidine-5'-monophosphate (OMP), and orotidine-5'-monophosphate decarboxylase (ODC), the terminal enzymatic reaction that decarboxylates OMP to uridine monophosphate (UMP). This Mus musculus (Mouse) protein is Uridine 5'-monophosphate synthase (Umps).